The primary structure comprises 98 residues: Cystatin-B (98 aa).

Met1 carries the N-acetylmethionine modification. A Secondary area of contact motif is present at residues 46–50; sequence QVVAG.

It belongs to the cystatin family.

It is found in the cytoplasm. Its function is as follows. This is an intracellular thiol proteinase inhibitor. In Sus scrofa (Pig), this protein is Cystatin-B (CSTB).